We begin with the raw amino-acid sequence, 365 residues long: Isopentenyl-diphosphate delta-isomerase (365 aa).

8 to 9 (RK) lines the substrate pocket. Residues 67–69 (SIT), Ser-97, and Asn-126 each bind FMN. 97-99 (SQR) serves as a coordination point for substrate. Residue Gln-160 coordinates substrate. Residue Glu-161 participates in Mg(2+) binding. FMN-binding positions include Lys-192, Thr-222, 272–274 (GVR), and 293–294 (AL).

It belongs to the IPP isomerase type 2 family. As to quaternary structure, homooctamer. Dimer of tetramers. FMN is required as a cofactor. The cofactor is NADPH. It depends on Mg(2+) as a cofactor.

The protein localises to the cytoplasm. It catalyses the reaction isopentenyl diphosphate = dimethylallyl diphosphate. Functionally, involved in the biosynthesis of isoprenoids. Catalyzes the 1,3-allylic rearrangement of the homoallylic substrate isopentenyl (IPP) to its allylic isomer, dimethylallyl diphosphate (DMAPP). The polypeptide is Isopentenyl-diphosphate delta-isomerase (Methanosarcina acetivorans (strain ATCC 35395 / DSM 2834 / JCM 12185 / C2A)).